The following is a 1365-amino-acid chain: Glucosyltransferase-S (1365 aa).

The segment at residues 1 to 36 (MEKNLRYKLHKVKKQWVAIGVTTVTLSFLAGGQVVA) is a signal peptide (or 37). 2 stretches are compositionally biased toward polar residues: residues 80 to 89 (DQTATSQVSP) and 127 to 146 (RQSAADTSTDGKAVPQTSDQ). Disordered regions lie at residues 80–99 (DQTATSQVSPATDGRVDNQV) and 127–152 (RQSAADTSTDGKAVPQTSDQPGHLET). 2 Cell wall-binding repeats span residues 146-166 (QPGHLETVDGKTYYVDANGQR) and 168-187 (KNYSMVIDGKTYYFDGQTGE). The segment at 200–1000 (QDNVPDSYQA…KPIDPSVKIT (801 aa)) is catalytic; approximate. Cell wall-binding repeat units lie at residues 1052 to 1071 (ANGFISKNGGIHYLDKNGQE), 1073 to 1092 (KNRFKEISGSWYYFDSDGKM), 1093 to 1112 (ATGKTKIGNDTYLFMPNGKQ), 1113 to 1133 (LKEGVWYDGKKAYYYDDNGRT), 1136 to 1159 (NKGFVEFRVDGQDKWRYFNGDGTI), 1160 to 1179 (AIGLVSLDNRTLYFDAYGYQ), 1234 to 1253 (LTGEQTIDGQKVFFQDNGVQ), 1278 to 1298 (GKGWYSTSDDNWVYVNESGQV), 1299 to 1318 (LTGLQTIDGQTVYFDDKGIQ), and 1343 to 1362 (RDRWKNVDGNWYYFNRNGLA).

The protein belongs to the glycosyl hydrolase 70 family.

It carries out the reaction [(1-&gt;6)-alpha-D-glucosyl](n) + sucrose = [(1-&gt;6)-alpha-D-glucosyl](n+1) + D-fructose. Glucan synthesis by GTF-S is independent of primer glucan unlike GTF-I. Production of extracellular glucans, that are thought to play a key role in the development of the dental plaque because of their ability to adhere to smooth surfaces and mediate the aggregation of bacterial cells and food debris. The chain is Glucosyltransferase-S (gtfS) from Streptococcus downei (Streptococcus sobrinus).